The chain runs to 402 residues: Eukaryotic initiation factor 4A (402 aa).

A Q motif motif is present at residues 29–57 (ESFDDMELKEELLRGIYGFGFEKPSAIQK). One can recognise a Helicase ATP-binding domain in the interval 60–230 (IVPCTTGKDV…NRFMRNPIRI (171 aa)). Residue 73 to 80 (AQSGTGKT) coordinates ATP. Positions 178–181 (DEAD) match the DEAD box motif. A Helicase C-terminal domain is found at 241–402 (GIRQFYINVQ…EMPESIADLI (162 aa)).

It belongs to the DEAD box helicase family. eIF4A subfamily. As to quaternary structure, eIF4F is a multi-subunit complex, the composition of which varies with external and internal environmental conditions. It is composed of at least EIF4A, EIF4E and EIF4G.

The catalysed reaction is ATP + H2O = ADP + phosphate + H(+). In terms of biological role, ATP-dependent RNA helicase which is a subunit of the eIF4F complex involved in cap recognition and is required for mRNA binding to ribosome. In the current model of translation initiation, eIF4A unwinds RNA secondary structures in the 5'-UTR of mRNAs which is necessary to allow efficient binding of the small ribosomal subunit, and subsequent scanning for the initiator codon. The sequence is that of Eukaryotic initiation factor 4A (inf-1) from Caenorhabditis elegans.